Here is a 511-residue protein sequence, read N- to C-terminus: Lysine--tRNA ligase (511 aa).

Mg(2+) contacts are provided by Glu421 and Glu428.

Belongs to the class-II aminoacyl-tRNA synthetase family. As to quaternary structure, homodimer. Requires Mg(2+) as cofactor.

It localises to the cytoplasm. The enzyme catalyses tRNA(Lys) + L-lysine + ATP = L-lysyl-tRNA(Lys) + AMP + diphosphate. The chain is Lysine--tRNA ligase from Aeromonas hydrophila subsp. hydrophila (strain ATCC 7966 / DSM 30187 / BCRC 13018 / CCUG 14551 / JCM 1027 / KCTC 2358 / NCIMB 9240 / NCTC 8049).